We begin with the raw amino-acid sequence, 164 residues long: UPF0251 protein MA_0157 (164 aa).

A disordered region spans residues 91–124; the sequence is GDYRMPRGDGTGPAGQGPVGGGRSRGQGKGRGGR. The span at 99–115 shows a compositional bias: gly residues; the sequence is DGTGPAGQGPVGGGRSR.

It belongs to the UPF0251 family.

This Methanosarcina acetivorans (strain ATCC 35395 / DSM 2834 / JCM 12185 / C2A) protein is UPF0251 protein MA_0157.